The chain runs to 227 residues: Cytochrome c oxidase subunit 2 (227 aa).

Over 1-14 the chain is Mitochondrial intermembrane; that stretch reads MAYPVQLGFQDAAS. The chain crosses the membrane as a helical span at residues 15-45; the sequence is PIMEELLYFHDHTLMIMFLISSLVLYIISLM. Topologically, residues 46–59 are mitochondrial matrix; sequence LTTELMHTNTMDAQ. The helical transmembrane segment at 60–87 threads the bilayer; it reads EVETVWTILPAAILILIALPSLRILYMM. Over 88-227 the chain is Mitochondrial intermembrane; that stretch reads DEITTPSLTL…HFEEWLLSML (140 aa). Residues H161, C196, E198, C200, H204, and M207 each coordinate Cu cation. E198 is a binding site for Mg(2+).

It belongs to the cytochrome c oxidase subunit 2 family. As to quaternary structure, component of the cytochrome c oxidase (complex IV, CIV), a multisubunit enzyme composed of 14 subunits. The complex is composed of a catalytic core of 3 subunits MT-CO1, MT-CO2 and MT-CO3, encoded in the mitochondrial DNA, and 11 supernumerary subunits COX4I, COX5A, COX5B, COX6A, COX6B, COX6C, COX7A, COX7B, COX7C, COX8 and NDUFA4, which are encoded in the nuclear genome. The complex exists as a monomer or a dimer and forms supercomplexes (SCs) in the inner mitochondrial membrane with NADH-ubiquinone oxidoreductase (complex I, CI) and ubiquinol-cytochrome c oxidoreductase (cytochrome b-c1 complex, complex III, CIII), resulting in different assemblies (supercomplex SCI(1)III(2)IV(1) and megacomplex MCI(2)III(2)IV(2)). Found in a complex with TMEM177, COA6, COX18, COX20, SCO1 and SCO2. Interacts with TMEM177 in a COX20-dependent manner. Interacts with COX20. Interacts with COX16. Cu cation is required as a cofactor.

It is found in the mitochondrion inner membrane. It carries out the reaction 4 Fe(II)-[cytochrome c] + O2 + 8 H(+)(in) = 4 Fe(III)-[cytochrome c] + 2 H2O + 4 H(+)(out). Its function is as follows. Component of the cytochrome c oxidase, the last enzyme in the mitochondrial electron transport chain which drives oxidative phosphorylation. The respiratory chain contains 3 multisubunit complexes succinate dehydrogenase (complex II, CII), ubiquinol-cytochrome c oxidoreductase (cytochrome b-c1 complex, complex III, CIII) and cytochrome c oxidase (complex IV, CIV), that cooperate to transfer electrons derived from NADH and succinate to molecular oxygen, creating an electrochemical gradient over the inner membrane that drives transmembrane transport and the ATP synthase. Cytochrome c oxidase is the component of the respiratory chain that catalyzes the reduction of oxygen to water. Electrons originating from reduced cytochrome c in the intermembrane space (IMS) are transferred via the dinuclear copper A center (CU(A)) of subunit 2 and heme A of subunit 1 to the active site in subunit 1, a binuclear center (BNC) formed by heme A3 and copper B (CU(B)). The BNC reduces molecular oxygen to 2 water molecules using 4 electrons from cytochrome c in the IMS and 4 protons from the mitochondrial matrix. This is Cytochrome c oxidase subunit 2 (MT-CO2) from Lemur catta (Ring-tailed lemur).